The sequence spans 411 residues: Serine hydroxymethyltransferase (411 aa).

120 to 122 contributes to the (6S)-5,6,7,8-tetrahydrofolate binding site; sequence GHL. Lys-225 carries the N6-(pyridoxal phosphate)lysine modification. 350–352 contributes to the (6S)-5,6,7,8-tetrahydrofolate binding site; that stretch reads SPF.

It belongs to the SHMT family. As to quaternary structure, homodimer. Requires pyridoxal 5'-phosphate as cofactor.

The protein localises to the cytoplasm. It carries out the reaction (6R)-5,10-methylene-5,6,7,8-tetrahydrofolate + glycine + H2O = (6S)-5,6,7,8-tetrahydrofolate + L-serine. Its pathway is one-carbon metabolism; tetrahydrofolate interconversion. The protein operates within amino-acid biosynthesis; glycine biosynthesis; glycine from L-serine: step 1/1. In terms of biological role, catalyzes the reversible interconversion of serine and glycine with tetrahydrofolate (THF) serving as the one-carbon carrier. This reaction serves as the major source of one-carbon groups required for the biosynthesis of purines, thymidylate, methionine, and other important biomolecules. Also exhibits THF-independent aldolase activity toward beta-hydroxyamino acids, producing glycine and aldehydes, via a retro-aldol mechanism. The protein is Serine hydroxymethyltransferase of Lactobacillus johnsonii (strain CNCM I-12250 / La1 / NCC 533).